Reading from the N-terminus, the 313-residue chain is MGDDIMPISNLAKESEVRAVKDIPCKNIETDNHLEIGLSSGLSRSKDTSKFKKNSINTIKLIDDIIALHNDPKGNKLLWNDNWQDKIINRDLANIFEKIDESVSELGGLEMYQEMVGVNPYDPTEPVCGLSAQNIFKLMTEGEHAVDPVEMAQTGKIDGNEFAESVDQLSSAKNYVALVNDRRLGHMFLIDIPSNDQETVGYIYQSDLGQGALPPLKIADWLNSRGKDAVSLNKLKKLLSREFNLLSDDEKRALISETLDIHKDVSNVELDRIKRDRGVDIYLTEYDVNNFYENIETLKSKLSNYDKKLSKPK.

Catalysis depends on residues cysteine 128, histidine 186, and glutamine 205.

This sequence belongs to the Cif family.

The protein resides in the secreted. The protein localises to the host nucleus. The catalysed reaction is L-glutaminyl-[protein] + H2O = L-glutamyl-[protein] + NH4(+). Functionally, protein-glutamine deamidase effector that inhibits the host cell cycle and other key cellular processes such as the actin network and programmed-cell death. Acts by mediating the side chain deamidation of 'Gln-40' of host NEDD8, converting it to glutamate, thereby abolishing the activity of cullin-RING-based E3 ubiquitin-protein ligase complexes (CRL complexes). Inactivation of CRL complexes prevents ubiquitination and subsequent degradation of the cyclin-dependent kinase inhibitors CDKN1A/p21 and CDKN1B/p27, leading to G1 and G2 cell cycle arrests in host cells. Deamidation of 'Gln-40' of host NEDD8 also triggers macrophage-specific programmed cell death. Also able to catalyze deamidation of 'Gln-40' of host ubiquitin in vitro; however, NEDD8 constitutes the preferred substrate in vivo. In Photorhabdus laumondii subsp. laumondii (strain DSM 15139 / CIP 105565 / TT01) (Photorhabdus luminescens subsp. laumondii), this protein is Protein-glutamine deamidase Cif.